A 186-amino-acid polypeptide reads, in one-letter code: MKKFFFAAALVVSGLLVGCNQLTQYTISEQEINQALEKRNNFSKDIGLPGIADAHIVLTNLVSQIGREEPNKVTLTGDARLDMNSLFGSQKATMKLKLKALPVFDKEKGAIYLQEMEVVDATVTPEKMQSVLQTLLPYLNQSLRSYFNQRPAYVLREDSSKGEALAKKLAKGIEVKPGEIVIPFTN.

An N-terminal signal peptide occupies residues 1-18 (MKKFFFAAALVVSGLLVG). The N-palmitoyl cysteine moiety is linked to residue Cys-19. Residue Cys-19 is the site of S-diacylglycerol cysteine attachment.

It is found in the cell membrane. This is an uncharacterized protein from Salmonella typhimurium (strain LT2 / SGSC1412 / ATCC 700720).